We begin with the raw amino-acid sequence, 463 residues long: ATP synthase subunit beta (463 aa).

152–159 contacts ATP; it reads GGAGVGKT.

This sequence belongs to the ATPase alpha/beta chains family. In terms of assembly, F-type ATPases have 2 components, CF(1) - the catalytic core - and CF(0) - the membrane proton channel. CF(1) has five subunits: alpha(3), beta(3), gamma(1), delta(1), epsilon(1). CF(0) has three main subunits: a(1), b(2) and c(9-12). The alpha and beta chains form an alternating ring which encloses part of the gamma chain. CF(1) is attached to CF(0) by a central stalk formed by the gamma and epsilon chains, while a peripheral stalk is formed by the delta and b chains.

It is found in the cell inner membrane. It carries out the reaction ATP + H2O + 4 H(+)(in) = ADP + phosphate + 5 H(+)(out). In terms of biological role, produces ATP from ADP in the presence of a proton gradient across the membrane. The catalytic sites are hosted primarily by the beta subunits. This chain is ATP synthase subunit beta, found in Shewanella oneidensis (strain ATCC 700550 / JCM 31522 / CIP 106686 / LMG 19005 / NCIMB 14063 / MR-1).